The chain runs to 181 residues: dCTP deaminase (181 aa).

DCTP contacts are provided by residues 100–105 (RSTFAR) and D116. E126 serves as the catalytic Proton donor/acceptor. 2 residues coordinate dCTP: Y158 and Q165. Positions 160-181 (GKYQGQRGVTPPKLDNSSSKNF) are disordered.

Belongs to the dCTP deaminase family. In terms of assembly, homotrimer.

The enzyme catalyses dCTP + H2O + H(+) = dUTP + NH4(+). It participates in pyrimidine metabolism; dUMP biosynthesis; dUMP from dCTP (dUTP route): step 1/2. Functionally, catalyzes the deamination of dCTP to dUTP. The sequence is that of dCTP deaminase from Desulfurococcus amylolyticus (strain DSM 18924 / JCM 16383 / VKM B-2413 / 1221n) (Desulfurococcus kamchatkensis).